Consider the following 24-residue polypeptide: Glutamate dehydrogenase (24 aa).

It belongs to the Glu/Leu/Phe/Val dehydrogenases family. In terms of assembly, homohexamer.

It is found in the cytoplasm. The catalysed reaction is L-glutamate + NAD(+) + H2O = 2-oxoglutarate + NH4(+) + NADH + H(+). It catalyses the reaction L-glutamate + NADP(+) + H2O = 2-oxoglutarate + NH4(+) + NADPH + H(+). This Pyrococcus woesei protein is Glutamate dehydrogenase (gdhA).